We begin with the raw amino-acid sequence, 241 residues long: Xyloglucan-specific endo-beta-1,4-glucanase 1 (241 aa).

A signal peptide spans 1–19 (MKGFFAGVVAAATLAVASA). Glu-136 is a catalytic residue. Residues Asn-174 and Asn-190 are each glycosylated (N-linked (GlcNAc...) asparagine). The active site involves Glu-222.

This sequence belongs to the glycosyl hydrolase 12 (cellulase H) family. In terms of assembly, interacts with host apoplastic glucanase inhibitor GIP1.

The protein localises to the secreted. It is found in the host. It catalyses the reaction xyloglucan + H2O = xyloglucan oligosaccharides.. Its activity is regulated as follows. The xyloglucanase activity is inhibited by the binding of the host apoplastic glucanase inhibitor GIP1. Functionally, glycoside hydrolase that exhibits xyloglucanase activity. Acts as an important virulence factor during P.sojae infection but also acts as a pathogen-associated molecular pattern (PAMP) in soybean and solanaceous species, where it can trigger defense responses including cell death. XEG1-induced cell death can be suppressed by P.sojae RxLR effectors. The PAMP activity is independent of its xyloglucanase activity. XEG1 induces plant defense responses in a RLP kinase Serk3/Bak1-dependent manner in Nicotiana benthamiana. Moreover, the perception of XEG1 occurs independently of the perception of ethylene-inducing xylanase Eix2 in Tomato. With truncated paralog XLP1, is required to elevate apoplastic sugar during P.sojae infection. The sequence is that of Xyloglucan-specific endo-beta-1,4-glucanase 1 from Phytophthora sojae (strain P6497) (Soybean stem and root rot agent).